The sequence spans 147 residues: Large ribosomal subunit protein uL15 (147 aa).

Residues 1–12 show a composition bias toward basic and acidic residues; that stretch reads MTLRLNDLKPAD. The interval 1 to 61 is disordered; that stretch reads MTLRLNDLKP…GFEGGQTPMQ (61 aa). The segment covering 23-33 has biased composition (gly residues); the sequence is RGIGSGLGKTA. Basic residues predominate over residues 34–47; that stretch reads GRGHKGSFARKGGG.

It belongs to the universal ribosomal protein uL15 family. As to quaternary structure, part of the 50S ribosomal subunit.

In terms of biological role, binds to the 23S rRNA. In Xanthomonas oryzae pv. oryzae (strain MAFF 311018), this protein is Large ribosomal subunit protein uL15.